The primary structure comprises 249 residues: Type III pantothenate kinase (249 aa).

6–13 (DIGNSRTK) serves as a coordination point for ATP. Residues Tyr89 and 96–99 (GIDR) contribute to the substrate site. The active-site Proton acceptor is the Asp98. Asp119 lines the K(+) pocket. Thr122 serves as a coordination point for ATP. Thr174 contributes to the substrate binding site.

This sequence belongs to the type III pantothenate kinase family. In terms of assembly, homodimer. NH4(+) serves as cofactor. It depends on K(+) as a cofactor.

Its subcellular location is the cytoplasm. It catalyses the reaction (R)-pantothenate + ATP = (R)-4'-phosphopantothenate + ADP + H(+). It functions in the pathway cofactor biosynthesis; coenzyme A biosynthesis; CoA from (R)-pantothenate: step 1/5. In terms of biological role, catalyzes the phosphorylation of pantothenate (Pan), the first step in CoA biosynthesis. This chain is Type III pantothenate kinase, found in Colwellia psychrerythraea (strain 34H / ATCC BAA-681) (Vibrio psychroerythus).